A 253-amino-acid polypeptide reads, in one-letter code: Isoprenyl transferase (253 aa).

Residue Asp-30 is part of the active site. Residue Asp-30 coordinates Mg(2+). Substrate contacts are provided by residues 31–34, Trp-35, His-51, and 79–81; these read GNRR and STE. Asn-82 functions as the Proton acceptor in the catalytic mechanism. Residues Phe-83, Arg-85, Arg-202, and 208-210 contribute to the substrate site; that span reads RVS. Residue Glu-221 participates in Mg(2+) binding.

It belongs to the UPP synthase family. In terms of assembly, homodimer. It depends on Mg(2+) as a cofactor.

Its function is as follows. Catalyzes the condensation of isopentenyl diphosphate (IPP) with allylic pyrophosphates generating different type of terpenoids. This chain is Isoprenyl transferase, found in Chlamydia muridarum (strain MoPn / Nigg).